Reading from the N-terminus, the 406-residue chain is Tryptophan synthase beta chain (406 aa).

Lys-99 is modified (N6-(pyridoxal phosphate)lysine).

Belongs to the TrpB family. In terms of assembly, tetramer of two alpha and two beta chains. It depends on pyridoxal 5'-phosphate as a cofactor.

It catalyses the reaction (1S,2R)-1-C-(indol-3-yl)glycerol 3-phosphate + L-serine = D-glyceraldehyde 3-phosphate + L-tryptophan + H2O. Its pathway is amino-acid biosynthesis; L-tryptophan biosynthesis; L-tryptophan from chorismate: step 5/5. Functionally, the beta subunit is responsible for the synthesis of L-tryptophan from indole and L-serine. This chain is Tryptophan synthase beta chain, found in Rhizobium meliloti (strain 1021) (Ensifer meliloti).